The following is a 326-amino-acid chain: Adenosine receptor A1 (326 aa).

Residues 1 to 10 (MPPSISAFQA) are Extracellular-facing. The chain crosses the membrane as a helical span at residues 11-33 (AYIGIEVLIALVSVPGNVLVIWA). Topologically, residues 34-46 (VKVNQALRDATFC) are cytoplasmic. Residues 47–69 (FIVSLAVADVAVGALVIPLAILI) form a helical membrane-spanning segment. At 70–80 (NIGPRTYFHTC) the chain is on the extracellular side. A disulfide bridge connects residues C80 and C169. The helical transmembrane segment at 81 to 102 (LKVACPVLILTQSSILALLAIA) threads the bilayer. Over 103 to 123 (VDRYLRVKIPLRYKTVVTPRR) the chain is Cytoplasmic. The chain crosses the membrane as a helical span at residues 124-146 (AVVAITGCWILSFVVGLTPMFGW). The Extracellular portion of the chain corresponds to 147–176 (NNLSAVERDWLANGSVGEPVIECQFEKVIS). N-linked (GlcNAc...) asparagine glycosylation is found at N148 and N159. The chain crosses the membrane as a helical span at residues 177–201 (MEYMVYFNFFVWVLPPLLLMVLIYM). Topologically, residues 202-235 (EVFYLIRKQLNKKVSASSGDPQKYYGKELKIAKS) are cytoplasmic. Residues 236–259 (LALILFLFALSWLPLHILNCITLF) traverse the membrane as a helical segment. Residues 260–267 (CPSCHMPR) lie on the Extracellular side of the membrane. Residues 268 to 292 (ILIYIAIFLSHGNSAMNPIVYAFRI) traverse the membrane as a helical segment. Residues 293-326 (QKFRVTFLKIWNDHFRCQPAPPVDEDAPAERPDD) lie on the Cytoplasmic side of the membrane. The S-palmitoyl cysteine moiety is linked to residue C309.

It belongs to the G-protein coupled receptor 1 family.

It is found in the cell membrane. Receptor for adenosine. The activity of this receptor is mediated by G proteins which inhibit adenylyl cyclase. This chain is Adenosine receptor A1 (ADORA1), found in Bos taurus (Bovine).